The sequence spans 422 residues: Exopolygalacturonase clone GBGE184 (422 aa).

The first 31 residues, 1-31, serve as a signal peptide directing secretion; that stretch reads MANARSLVAKANNINVGSLILMALVFGSCVA. PbH1 repeat units lie at residues 200 to 226, 227 to 248, 250 to 270, 280 to 301, and 310 to 331; these read TENVNIQNIKLTAPAESPNTDGIHLSN, ADNVSILDSTIATGDDCVSVGR, SNNVTVERVICGPGHGLSVGS, VSGIHVNNCTMIETDNGLRIKT, and AVDIKFENIIMQSVKNPIIIDQ. N-linked (GlcNAc...) asparagine glycosylation occurs at Asn229. Asp241 serves as the catalytic Proton donor. A disulfide bridge connects residues Cys243 and Cys260. The N-linked (GlcNAc...) asparagine glycan is linked to Asn252. The active site involves His264. A glycan (N-linked (GlcNAc...) asparagine) is linked at Asn287. Intrachain disulfides connect Cys366-Cys372 and Cys404-Cys420.

It belongs to the glycosyl hydrolase 28 family.

It is found in the secreted. Its subcellular location is the cell wall. It catalyses the reaction [(1-&gt;4)-alpha-D-galacturonosyl](n) + H2O = alpha-D-galacturonate + [(1-&gt;4)-alpha-D-galacturonosyl](n-1). In terms of biological role, may function in depolymerizing pectin during pollen development, germination, and tube growth. Acts as an exo-polygalacturonase. The chain is Exopolygalacturonase clone GBGE184 (PGA3) from Arabidopsis thaliana (Mouse-ear cress).